The following is a 217-amino-acid chain: NAD(P)H-hydrate epimerase (217 aa).

The YjeF N-terminal domain maps to 1–217 (MRAIENAAMA…VAVADIGLSS (217 aa)). Position 48–52 (48–52 (NNGGD)) interacts with (6S)-NADPHX. 2 residues coordinate K(+): N49 and D127. Residues 131–137 (GIGQTRP) and D165 contribute to the (6S)-NADPHX site. T168 is a binding site for K(+).

The protein belongs to the NnrE/AIBP family. Requires K(+) as cofactor.

The enzyme catalyses (6R)-NADHX = (6S)-NADHX. It catalyses the reaction (6R)-NADPHX = (6S)-NADPHX. Functionally, catalyzes the epimerization of the S- and R-forms of NAD(P)HX, a damaged form of NAD(P)H that is a result of enzymatic or heat-dependent hydration. This is a prerequisite for the S-specific NAD(P)H-hydrate dehydratase to allow the repair of both epimers of NAD(P)HX. The sequence is that of NAD(P)H-hydrate epimerase from Cereibacter sphaeroides (strain KD131 / KCTC 12085) (Rhodobacter sphaeroides).